The sequence spans 360 residues: Chorismate synthase (360 aa).

The NADP(+) site is built by R48 and R54. FMN is bound by residues 125-127 (RSS), 246-247 (NA), G286, 301-305 (KPTSS), and R327.

It belongs to the chorismate synthase family. In terms of assembly, homotetramer. The cofactor is FMNH2.

It carries out the reaction 5-O-(1-carboxyvinyl)-3-phosphoshikimate = chorismate + phosphate. It participates in metabolic intermediate biosynthesis; chorismate biosynthesis; chorismate from D-erythrose 4-phosphate and phosphoenolpyruvate: step 7/7. Catalyzes the anti-1,4-elimination of the C-3 phosphate and the C-6 proR hydrogen from 5-enolpyruvylshikimate-3-phosphate (EPSP) to yield chorismate, which is the branch point compound that serves as the starting substrate for the three terminal pathways of aromatic amino acid biosynthesis. This reaction introduces a second double bond into the aromatic ring system. The chain is Chorismate synthase from Haemophilus ducreyi (strain 35000HP / ATCC 700724).